Consider the following 253-residue polypeptide: Non-homologous end joining protein Ku (253 aa).

The region spanning 9 to 192 (ISFGLVNIPV…EITEEELELA (184 aa)) is the Ku domain.

Belongs to the prokaryotic Ku family. As to quaternary structure, homodimer. Interacts with LigD.

With LigD forms a non-homologous end joining (NHEJ) DNA repair enzyme, which repairs dsDNA breaks with reduced fidelity. Binds linear dsDNA with 5'- and 3'- overhangs but not closed circular dsDNA nor ssDNA. Recruits and stimulates the ligase activity of LigD. This chain is Non-homologous end joining protein Ku, found in Archaeoglobus fulgidus (strain ATCC 49558 / DSM 4304 / JCM 9628 / NBRC 100126 / VC-16).